The sequence spans 1231 residues: uncharacterized protein (1231 aa).

Disordered stretches follow at residues 171–197 (LKPD…QHDD), 210–259 (DESF…HLPT), and 389–547 (ASPR…RSSR). A compositionally biased stretch (basic residues) spans 440-450 (RSRHSHKRRSI). Serine 449, serine 451, serine 453, and serine 455 each carry phosphoserine. The span at 458-502 (RGGRRAVRRSRSRSPRRSYNRGSTRSRSRSMRHRSRSPAHYRGRG) shows a compositional bias: basic residues. Positions 503–541 (RGREPASKERGSSSRDFGGRHSLQRERERSSEYYHRNEG) are enriched in basic and acidic residues. Tyrosine 549 carries the post-translational modification Phosphotyrosine. 3 disordered regions span residues 570–591 (KTSS…ASEP), 950–981 (PNLD…DDEE), and 1058–1203 (TLSK…PPFN). Phosphoserine occurs at positions 573 and 589. Position 970 is a phosphothreonine (threonine 970). Serine 972 is modified (phosphoserine). Over residues 1076-1103 (YMMNQQHGAPNAQNAPNLGQNPGQNLGQ) the composition is skewed to polar residues. The span at 1118 to 1127 (QQQQQQQQQQ) shows a compositional bias: low complexity. The span at 1178–1203 (PPGPGGYVGPPPNPWASNVPPQPPFN) shows a compositional bias: pro residues.

This is an uncharacterized protein from Drosophila melanogaster (Fruit fly).